Consider the following 634-residue polypeptide: TATA box-binding protein-associated factor RNA polymerase I subunit B (634 aa).

The RRN7-type zinc-finger motif lies at 19-51; it reads LVCEYCGHGSEYAEDDADDGFFTCRQCSAIHTS. Zn(2+)-binding residues include Cys-21, Cys-24, Cys-42, and Cys-45. Positions 51-80 are B-reader; that stretch reads STQNTATNPFDFPMTPAHLSAHRRPTQPTP. The tract at residues 54-107 is disordered; it reads NTATNPFDFPMTPAHLSAHRRPTQPTPTPKPFPAPRGAATGAAAPDFDDLGEPS. The span at 77-87 shows a compositional bias: pro residues; that stretch reads QPTPTPKPFPA. The interval 81-83 is B-linker; sequence TPK. Residues 84–281 form an N-terminal cyclin fold region; the sequence is PFPAPRGAAT…DKLLGSSLND (198 aa). Over residues 88–98 the composition is skewed to low complexity; it reads PRGAATGAAAP. The tract at residues 282–284 is C-terminal cyclin fold; sequence CPL.

It belongs to the RRN7/TAF1B family.

The protein resides in the nucleus. The protein localises to the nucleolus. Its function is as follows. Component of RNA polymerase I core factor complex that acts as a GTF2B/TFIIB-like factor and plays a key role in multiple steps during transcription initiation such as pre-initiation complex (PIC) assembly and postpolymerase recruitment events in polymerase I (Pol I) transcription. Binds rDNA promoters and plays a role in Pol I recruitment. The polypeptide is TATA box-binding protein-associated factor RNA polymerase I subunit B (Oryza sativa subsp. japonica (Rice)).